Consider the following 550-residue polypeptide: Formate--tetrahydrofolate ligase (550 aa).

60 to 67 (TPFGEGKT) is a binding site for ATP.

It belongs to the formate--tetrahydrofolate ligase family.

It catalyses the reaction (6S)-5,6,7,8-tetrahydrofolate + formate + ATP = (6R)-10-formyltetrahydrofolate + ADP + phosphate. It functions in the pathway one-carbon metabolism; tetrahydrofolate interconversion. This Campylobacter curvus (strain 525.92) protein is Formate--tetrahydrofolate ligase.